A 518-amino-acid chain; its full sequence is Protein nucleotidyltransferase YdiU (518 aa).

The segment covering 1–10 (MTHLQFDNRL) has biased composition (basic and acidic residues). The disordered stretch occupies residues 1-23 (MTHLQFDNRLRAQLPGDPEQGPR). ATP is bound by residues Gly100, Gly102, Arg103, Lys123, Asp135, Gly136, Arg193, and Arg200. Catalysis depends on Asp270, which acts as the Proton acceptor. Mg(2+) is bound by residues Asn271 and Asp280. An ATP-binding site is contributed by Asp280.

Belongs to the SELO family. The cofactor is Mg(2+). Mn(2+) serves as cofactor.

It carries out the reaction L-seryl-[protein] + ATP = 3-O-(5'-adenylyl)-L-seryl-[protein] + diphosphate. The enzyme catalyses L-threonyl-[protein] + ATP = 3-O-(5'-adenylyl)-L-threonyl-[protein] + diphosphate. The catalysed reaction is L-tyrosyl-[protein] + ATP = O-(5'-adenylyl)-L-tyrosyl-[protein] + diphosphate. It catalyses the reaction L-histidyl-[protein] + UTP = N(tele)-(5'-uridylyl)-L-histidyl-[protein] + diphosphate. It carries out the reaction L-seryl-[protein] + UTP = O-(5'-uridylyl)-L-seryl-[protein] + diphosphate. The enzyme catalyses L-tyrosyl-[protein] + UTP = O-(5'-uridylyl)-L-tyrosyl-[protein] + diphosphate. Its function is as follows. Nucleotidyltransferase involved in the post-translational modification of proteins. It can catalyze the addition of adenosine monophosphate (AMP) or uridine monophosphate (UMP) to a protein, resulting in modifications known as AMPylation and UMPylation. In Xanthomonas campestris pv. campestris (strain B100), this protein is Protein nucleotidyltransferase YdiU.